Consider the following 205-residue polypeptide: Putative 3-methyladenine DNA glycosylase (205 aa).

This sequence belongs to the DNA glycosylase MPG family.

This is Putative 3-methyladenine DNA glycosylase from Bacillus thuringiensis (strain Al Hakam).